A 218-amino-acid polypeptide reads, in one-letter code: Octanoyltransferase (218 aa).

The 184-residue stretch at Gly-30 to Ile-213 folds into the BPL/LPL catalytic domain. Substrate-binding positions include Arg-75–His-82, Ala-143–Gly-145, and Gly-156–Ala-158. Residue Cys-174 is the Acyl-thioester intermediate of the active site.

This sequence belongs to the LipB family.

It localises to the cytoplasm. The enzyme catalyses octanoyl-[ACP] + L-lysyl-[protein] = N(6)-octanoyl-L-lysyl-[protein] + holo-[ACP] + H(+). Its pathway is protein modification; protein lipoylation via endogenous pathway; protein N(6)-(lipoyl)lysine from octanoyl-[acyl-carrier-protein]: step 1/2. Functionally, catalyzes the transfer of endogenously produced octanoic acid from octanoyl-acyl-carrier-protein onto the lipoyl domains of lipoate-dependent enzymes. Lipoyl-ACP can also act as a substrate although octanoyl-ACP is likely to be the physiological substrate. The chain is Octanoyltransferase from Alkaliphilus metalliredigens (strain QYMF).